Reading from the N-terminus, the 2016-residue chain is Cell adhesion molecule Dscam1 (2016 aa).

The N-terminal stretch at 1–28 is a signal peptide; that stretch reads MNMPNERLKWLMLFAAVALIACGSQTLA. At 29 to 1618 the chain is on the extracellular side; sequence ANPPDADQKG…TIRIILSNLN (1590 aa). 9 consecutive Ig-like C2-type domains span residues 39–134, 138–230, 247–338, 342–421, 428–522, 527–613, 618–712, 715–807, and 812–904; these read PVFL…VHVR, AQYY…TRLS, PKIN…TVLT, PLSA…AELK, PPVI…AKLN, PYIR…LEVQ, PQVL…LQVN, PRWI…IMIS, and PEFT…ASIN. Asn53 is a glycosylation site (N-linked (GlcNAc...) asparagine). Cys61 and Cys117 are joined by a disulfide. Asp144, Asn146, and Leu161 together coordinate Zn(2+). 13 disulfides stabilise this stretch: Cys160/Cys217, Cys160/Thr219, Cys160/Lys220, Cys269/Cys322, Pro270/Val323, Ala276/Gly329, Cys364/Cys405, Cys450/Cys506, Cys547/Cys596, Cys640/Cys694, Val641/Cys694, Val641/Ile695, and Cys736/Cys790. Asn325 is a glycosylation site (N-linked (GlcNAc...) asparagine). Asn492 and Asn577 each carry an N-linked (GlcNAc...) asparagine glycan. An N-linked (GlcNAc...) asparagine glycan is attached at Asn820. Cys833 and Cys890 form a disulfide bridge. Fibronectin type-III domains lie at 913 to 1007, 1012 to 1116, 1117 to 1213, and 1217 to 1310; these read MPYA…TAEE, KPQN…TPSQ, PPSD…TEPD, and APTD…PSDQ. Asn1022, Asn1055, and Asn1186 each carry an N-linked (GlcNAc...) asparagine glycan. Residues 1312–1394 enclose the Ig-like C2-type 10 domain; sequence PAKIASFDDT…ENSIAKDSIT (83 aa). An intrachain disulfide couples Cys1334 to Cys1382. Fibronectin type-III domains lie at 1402 to 1495 and 1499 to 1594; these read PPQS…TKGQ and LPEK…TGGT. Residues 1619 to 1639 form a helical membrane-spanning segment; the sequence is LVVPVVAALLVIIIAIIVICI. Over 1640–2016 the chain is Cytoplasmic; sequence LRSKGNHHKD…GFTAYDTMAV (377 aa). The PXXP motif 1; SH3-binding motif lies at 1685 to 1688; it reads PPVP. Residues 1688–1719 are disordered; sequence PGSNYNTCDRIKRGRGGLRSNHSTWDPRRNPN. The PXXP motif 2; SH3-binding motif lies at 1727 to 1730; it reads PPVP. 2 disordered regions span residues 1787-1846 and 1862-2016; these read GHAG…DDPA and SQGG…TMAV. Polar residues predominate over residues 1826 to 1836; sequence KNSQGGQSSIY. Positions 1842–1845 match the YXXP motif 1; potential SH2-binding motif; that stretch reads YDDP. A YXXP motif 2; potential SH2-binding motif is present at residues 1875-1878; it reads YDDP. Low complexity predominate over residues 1897–1918; that stretch reads GQPYDHYGSRGSMGRRSIGSAR. Positions 1925-1932 match the Polyproline tract (probable SH3-binding) motif; the sequence is PEPPPPPP. Composition is skewed to basic and acidic residues over residues 1944–1962 and 1974–1993; these read DSKE…DHGP and QPKD…RNET. Positions 1994–2004 are enriched in polar residues; that stretch reads GPKQLQLQQAN.

Homodimer (via extracellular region); alternative splicing produces a potential 19,008 different ectodomains and the majority of these show strong isoform-specific homodimerization. Interacts (via cytoplasmic domain) with dock/dreadlocks (via SH2 and SH3 domains); the interaction is direct and may require Dscam1 to be phosphorylated. Post-translationally, phosphorylated on tyrosine residues in the intracellular domain. Tyrosine protein kinase Src42A and possibly Src64B are involved in this phosphorylation. Glycosylation on Asn-53 and Asn-325 is involved in stabilizing dimerization. In terms of processing, proteolytically processed, probably to generate a secreted form. Secreted into the hemolymph (at protein level). Expressed in brain and eye-antennal imaginal disks, including R3/R4 and R7 photoreceptor cells. Individual R3/R4 cells express between 14 and 50 randomly generated mRNAs encoding distinct isoforms.

It localises to the cell membrane. It is found in the cell projection. The protein localises to the neuron projection. The protein resides in the axon. Its subcellular location is the perikaryon. It localises to the dendrite. It is found in the secreted. In terms of biological role, cell surface receptor involved in guidance and targeting of growing nerve axons. Required during Bolwig's organ differentiation for accurate and efficient targeting of photoreceptor neuron axons to their synaptic targets in the brain via the P2 intermediate target neuron. Involved in isoneural self-avoidance during dendrite arborization but not in heteroneural recognition and repulsion during tiling by related neurons of the same class. Involved in regulating axon bifurcation and divergent extension in the developing mushroom body. Essential for axon arborisation in ellipsoid body. Exhibits an extraordinary level of molecular diversity resulting from alternative splicing. Isoforms differing in their ectodomain makeup show a high degree of functional redundancy while isoforms with different transmembrane domains are involved in different neuronal morphogenetic processes and are differentially targeted to dendrites or axons. The vast majority of isoforms exhibit strong isoform-specific homophilic binding. Individual cells express a distinct randomly generated repertoire of isoforms. Cell surfaces bearing identical repertoires of Dscam1 isoforms, such as those from the same cell, trigger recognition and avoidance. A subset of isoforms is expressed in fat body cells and hemocytes, cells that are part of the insect immune response, and these isoforms are secreted into the hemolymph. The secreted form comprising the ectodomain can bind to bacteria, such as Escherichia coli, and may act as an opsonin enhancing their phagocytosis by hemocytes. The chain is Cell adhesion molecule Dscam1 from Drosophila melanogaster (Fruit fly).